Consider the following 70-residue polypeptide: Large ribosomal subunit protein eL38 (70 aa).

This sequence belongs to the eukaryotic ribosomal protein eL38 family.

The protein is Large ribosomal subunit protein eL38 (RPL38) of Artemia franciscana (Brine shrimp).